The chain runs to 324 residues: Putative divalent cation/proton antiporter TMEM165 (324 aa).

Positions Met-1–Ala-33 are cleaved as a signal peptide. At Gly-34–Thr-89 the chain is on the lumenal side. The span at Pro-35–Glu-45 shows a compositional bias: basic and acidic residues. The disordered stretch occupies residues Pro-35–Ala-59. Over residues Ala-50–Ala-59 the composition is skewed to low complexity. Residues Asn-90–Gly-110 form a helical membrane-spanning segment. At Asp-111–Arg-126 the chain is on the cytoplasmic side. The chain crosses the membrane as a helical span at residues Leu-127 to Phe-147. The Lumenal portion of the chain corresponds to Gly-148–Thr-151. The helical transmembrane segment at Thr-152 to Ile-172 threads the bilayer. The Cytoplasmic segment spans residues Arg-173 to Lys-228. A coiled-coil region spans residues Asp-184–Asn-211. A helical membrane pass occupies residues Trp-229–Trp-249. Topologically, residues Gly-250 to Tyr-267 are lumenal. A helical membrane pass occupies residues Gly-268–Gly-288. Over Arg-289–Thr-299 the chain is Cytoplasmic. A helical transmembrane segment spans residues Val-300–Pro-320. Topologically, residues Asp-321–Phe-324 are lumenal.

The protein belongs to the GDT1 family. In terms of tissue distribution, ubiquitously expressed.

It is found in the golgi apparatus membrane. The enzyme catalyses Ca(2+)(in) + n H(+)(out) = Ca(2+)(out) + n H(+)(in). It carries out the reaction Mn(2+)(in) + n H(+)(out) = Mn(2+)(out) + n H(+)(in). Functionally, putative divalent cation:proton antiporter that exchanges calcium or manganese ions for protons across the Golgi membrane. Mediates the reversible transport of calcium or manganese to the Golgi lumen driven by the proton gradient and possibly the membrane potential generated by V-ATPase. Provides calcium or manganese cofactors to resident Golgi enzymes and contributes to the maintenance of an acidic luminal Golgi pH required for proper functioning of the secretory pathway. Promotes Ca(2+) storage within the Golgi lumen of the mammary epithelial cells to be then secreted into milk. The transport mechanism and stoichiometry remains to be elucidated. This is Putative divalent cation/proton antiporter TMEM165 from Homo sapiens (Human).